The following is a 732-amino-acid chain: Acylamino-acid-releasing enzyme (732 aa).

Position 1 is an N-acetylmethionine (methionine 1). A Phosphoserine modification is found at serine 187. Catalysis depends on charge relay system residues serine 587, aspartate 675, and histidine 707.

Belongs to the peptidase S9C family. As to quaternary structure, homotetramer. As to expression, expressed in the liver (at protein level).

It localises to the cytoplasm. It carries out the reaction Cleavage of an N-acetyl or N-formyl amino acid from the N-terminus of a polypeptide.. Its activity is regulated as follows. Homotetramerization is required for activity. Tetramerization results in the formation of a gated channel which is involved in substrate selection and substrate access to the catalytic sites. In terms of biological role, this enzyme catalyzes the hydrolysis of the N-terminal peptide bond of an N-acetylated peptide to generate an N-acetylated amino acid and a peptide with a free N-terminus. It preferentially cleaves off Ac-Ala, Ac-Met and Ac-Ser. Also, involved in the degradation of oxidized and glycated proteins. The polypeptide is Acylamino-acid-releasing enzyme (APEH) (Sus scrofa (Pig)).